We begin with the raw amino-acid sequence, 848 residues long: MNNNDLFQASRRRFLAQLGGLTVAGMLGPSLLTSRRATAAQAATEAVISKEGILTGSHWGAIRATVKDGRFVAAKPFELDKYPSKMIAGLPDHVHNAARIRYPMVRVDWLRKRHLSDTSQRGDNRFVRVSWDEALDMFYEELERVQKTHGPSALLTASGWQSTGMFHNASGMLAKAIALHGNSVGTGGDYSTGAAQVILPRVVGSMEVYEQQTSWPLVLQNSKTIVLWGSDLLKNQQANWWCPDHDVYEYYAQLKAKVAAGEIEVISIDPVVTSTHEYLGREHVKHIAVNPQTDVPLQLALAHTLYSENLYDKNFLANYCVGFEQFLPYLLGEKDGQPKDAAWAEKLTGIDAETIRGLARQMAANRTQIIAGWCVQRMQHGEQWAWMIVVLAAMLGQIGLPGGGFGFGWHYNGAGTPGRKGVILSGFSGSTSIPPVHDNSDYKGYSSTIPIARFIDAILEPGKVINWNGKSVKLPPLKMCIFAGTNPFHRHQQINRIIEGWRKLETVIAIDNQWTSTCRFADIVLPATTQFERNDLDQYGNHSNRGIIAMKQVVPPQFEARNDFDIFRELCRRFNREEAFTEGLDEMGWLKRIWQEGVQQGKGRGVHLPAFDDFWNNKEYVEFDHPQMFVRHQAFREDPDLEPLGTPSGLIEIYSKTIADMNYDDCQGHPMWFEKIERSHGGPGSQTYPLHLQSVHPDFRLHSQLCESETLRQQYTVAGKEPVFINPQDASARGIRNGDVVRVFNARGQVLAGAVVSDRYAPGVARIHEGAWHDPDKGGEPGALCKYGNPNVLTIDIGTSQLAQATSAHTTLVEIEKCNGTVEQVTAFNGPVEMVAQCEYVPASQVKL.

The tat-type signal signal peptide spans 1–39 (MNNNDLFQASRRRFLAQLGGLTVAGMLGPSLLTSRRATA). Residue S191 coordinates Mo-bis(molybdopterin guanine dinucleotide).

The protein belongs to the prokaryotic molybdopterin-containing oxidoreductase family. In terms of assembly, interacts with the N-terminal domain of TorC. It depends on Mo-bis(molybdopterin guanine dinucleotide) as a cofactor. Post-translationally, predicted to be exported by the Tat system. The position of the signal peptide cleavage has not been experimentally proven.

The protein resides in the periplasm. It carries out the reaction trimethylamine + 2 Fe(III)-[cytochrome c] + H2O = trimethylamine N-oxide + 2 Fe(II)-[cytochrome c] + 3 H(+). Its function is as follows. Reduces trimethylamine-N-oxide (TMAO) into trimethylamine; an anaerobic reaction coupled to energy-yielding reactions. The polypeptide is Trimethylamine-N-oxide reductase 1 (torA) (Escherichia coli O157:H7).